The sequence spans 210 residues: Somatotropin (210 aa).

The signal sequence occupies residues 1–22 (MAKALVLLSLVLVSVFVNNGTA). Zn(2+) is bound at residue His38. Cys71 and Cys183 are oxidised to a cystine. Glu192 serves as a coordination point for Zn(2+). Residues Cys200 and Cys208 are joined by a disulfide bond.

This sequence belongs to the somatotropin/prolactin family.

The protein resides in the secreted. Its function is as follows. Growth hormone plays an important role in growth control and is involved in the regulation of several anabolic processes. Implicated as an osmoregulatory substance important for seawater adaptation. In Misgurnus mizolepis (Chinese weatherloach), this protein is Somatotropin (gh).